Consider the following 554-residue polypeptide: Terpene synthase 17 (554 aa).

Mg(2+) is bound by residues D306, D310, and E458. Positions 306–310 (DDTYD) match the DDXXD motif motif.

The protein belongs to the terpene synthase family. Tpsa subfamily. Requires Mg(2+) as cofactor. Mn(2+) is required as a cofactor. As to expression, mostly expressed in stem and trichomes, to a lower extent in leaves, flowers and roots and, at low levels, in fruits.

The catalysed reaction is (2Z,6Z)-farnesyl diphosphate = beta-bisabolene + diphosphate. The enzyme catalyses (2E,6E)-farnesyl diphosphate = (+)-valencene + diphosphate. It catalyses the reaction (2E,6E)-farnesyl diphosphate = (E)-beta-farnesene + diphosphate. It carries out the reaction (2E,6E)-farnesyl diphosphate = gamma-gurjunene + diphosphate. The catalysed reaction is (2Z,6Z)-farnesyl diphosphate = (E)-gamma-bisabolene + diphosphate. The enzyme catalyses (2E)-geranyl diphosphate = limonene + diphosphate. It catalyses the reaction (2E)-geranyl diphosphate = beta-myrcene + diphosphate. It carries out the reaction (2E)-geranyl diphosphate = (E)-beta-ocimene + diphosphate. The catalysed reaction is (2E)-geranyl diphosphate = terpinolene + diphosphate. The enzyme catalyses (2E)-geranyl diphosphate = gamma-terpinene + diphosphate. It catalyses the reaction (2Z,6Z)-farnesyl diphosphate = (Z)-gamma-bisabolene + diphosphate. It carries out the reaction (2E,6E)-farnesyl diphosphate = (1S,5S,6R)-alpha-bergamotene + diphosphate. The catalysed reaction is (2Z,6Z)-farnesyl diphosphate = (1S,5S,6S)-alpha-bergamotene + diphosphate. It functions in the pathway secondary metabolite biosynthesis; terpenoid biosynthesis. Sesquiterpene synthase involved in the biosynthesis of volatile compounds. Mediates the conversion of (2E,6E)-farnesyl diphosphate (FPP) into gamma-gurjunene, (E)-beta-farnesene and (+)-valencene, and of (2Z,6Z)-farnesyl diphosphate ((ZZ)-FPP) into (E)-alpha-bergamotene and (Z)-gamma-bisabolene as well as beta-bisabolene, (Z)-alpha-bergamotene and (E)-gamma-bisabolene to a lower extent. Can act with a low efficiency as a monoterpene synthase with geranyl diphosphate (GPP) as substrate, thus producing beta-myrcene, (E)-beta-ocimene, limonene, terpinolene, gamma-terpinene and (Z)-beta-ocimene. This chain is Terpene synthase 17, found in Solanum lycopersicum (Tomato).